Here is a 216-residue protein sequence, read N- to C-terminus: V-type ATP synthase subunit D (216 aa).

Belongs to the V-ATPase D subunit family.

In terms of biological role, produces ATP from ADP in the presence of a proton gradient across the membrane. This Clostridium botulinum (strain ATCC 19397 / Type A) protein is V-type ATP synthase subunit D.